A 262-amino-acid polypeptide reads, in one-letter code: Ribosome-recycling factor, mitochondrial (262 aa).

The N-terminal 55 residues, 1 to 55 (MALGLRCFRLVHPAFCNSLAALTRPVSEVTLQTVRGRQNDHGQCMAYAAVPVRHF), are a transit peptide targeting the mitochondrion.

The protein belongs to the RRF family.

It localises to the mitochondrion. Functionally, responsible for the disassembly of ribosomes from messenger RNA at the termination of mitochondrial protein biosynthesis. Acts in collaboration with GFM2. Promotes mitochondrial ribosome recycling by dissolution of intersubunit contacts. This Bos taurus (Bovine) protein is Ribosome-recycling factor, mitochondrial (MRRF).